Consider the following 271-residue polypeptide: Probable CAAX prenyl protease 2 (271 aa).

2 consecutive transmembrane segments (helical) span residues Val-3 to Val-23 and Cys-42 to Pro-62. Residues Glu-126 and His-160 each act as proton donor/acceptor in the active site. A run of 2 helical transmembrane segments spans residues Ala-174–Trp-194 and Ile-236–Asp-256.

The protein belongs to the peptidase U48 family.

It is found in the endoplasmic reticulum membrane. The catalysed reaction is Hydrolyzes the peptide bond -P2-(S-farnesyl or geranylgeranyl)C-P1'-P2'-P3'-COOH where P1' and P2' are amino acids with aliphatic sidechains and P3' is any C-terminal residue.. Functionally, protease involved in the processing of a variety of prenylated proteins containing the C-terminal CAAX motif, where C is a cysteine modified with an isoprenoid lipid, A is an aliphatic amino acid and X is any C-terminal amino acid. Proteolytically removes the C-terminal three residues of farnesylated proteins, leaving the prenylated cysteine as the new C-terminus. In Schizosaccharomyces pombe (strain 972 / ATCC 24843) (Fission yeast), this protein is Probable CAAX prenyl protease 2.